A 215-amino-acid polypeptide reads, in one-letter code: Pyridoxine/pyridoxamine 5'-phosphate oxidase (215 aa).

Substrate-binding positions include 9–12 (RRDY) and Lys69. FMN is bound by residues 64-69 (RILLLK), 79-80 (FT), Lys86, and Gln108. Residues Tyr126, Arg130, and Ser134 each coordinate substrate. Residues 143 to 144 (QS) and Trp188 contribute to the FMN site. 194–196 (RLH) is a substrate binding site. Arg198 is an FMN binding site.

This sequence belongs to the pyridoxamine 5'-phosphate oxidase family. As to quaternary structure, homodimer. The cofactor is FMN.

The catalysed reaction is pyridoxamine 5'-phosphate + O2 + H2O = pyridoxal 5'-phosphate + H2O2 + NH4(+). It catalyses the reaction pyridoxine 5'-phosphate + O2 = pyridoxal 5'-phosphate + H2O2. It functions in the pathway cofactor metabolism; pyridoxal 5'-phosphate salvage; pyridoxal 5'-phosphate from pyridoxamine 5'-phosphate: step 1/1. Its pathway is cofactor metabolism; pyridoxal 5'-phosphate salvage; pyridoxal 5'-phosphate from pyridoxine 5'-phosphate: step 1/1. Catalyzes the oxidation of either pyridoxine 5'-phosphate (PNP) or pyridoxamine 5'-phosphate (PMP) into pyridoxal 5'-phosphate (PLP). The protein is Pyridoxine/pyridoxamine 5'-phosphate oxidase of Pseudomonas fluorescens (strain ATCC BAA-477 / NRRL B-23932 / Pf-5).